The sequence spans 449 residues: Hyaluronidase-2 (449 aa).

The first 23 residues, 1–23, serve as a signal peptide directing secretion; it reads MYHLWIKCLAAWIFLKRCNGVHA. Disulfide bonds link C47–C340 and C211–C227. N-linked (GlcNAc...) asparagine glycosylation is found at N67, N103, and N111. The active-site Proton donor is the E135. N-linked (GlcNAc...) asparagine glycosylation is present at N153. Residue N357 is glycosylated (N-linked (GlcNAc...) asparagine). Cystine bridges form between C365–C376, C370–C427, and C429–C438. N401 carries N-linked (GlcNAc...) asparagine glycosylation. Positions 427–438 constitute an EGF-like domain; sequence CQCYQGWKGLYC.

This sequence belongs to the glycosyl hydrolase 56 family. As to quaternary structure, monomer. In terms of tissue distribution, expressed by the venom gland.

It is found in the secreted. The enzyme catalyses Random hydrolysis of (1-&gt;4)-linkages between N-acetyl-beta-D-glucosamine and D-glucuronate residues in hyaluronate.. In terms of biological role, snake venom endo-hyaluronidase that degrades hyaluronan to smaller oligosaccharide fragments. In venom, it is not toxic by itself, but increases the diffusion of other venom proteins by degrading the extracellular matrix. In addition, it displays antiedematogenic activity. This Bitis arietans (African puff adder) protein is Hyaluronidase-2.